Consider the following 105-residue polypeptide: Putative membrane protein insertion efficiency factor (105 aa).

Belongs to the UPF0161 family.

Its subcellular location is the cell membrane. Functionally, could be involved in insertion of integral membrane proteins into the membrane. This chain is Putative membrane protein insertion efficiency factor, found in Bifidobacterium longum (strain NCC 2705).